The chain runs to 183 residues: ATP synthase subunit delta (183 aa).

Belongs to the ATPase delta chain family. In terms of assembly, F-type ATPases have 2 components, F(1) - the catalytic core - and F(0) - the membrane proton channel. F(1) has five subunits: alpha(3), beta(3), gamma(1), delta(1), epsilon(1). F(0) has three main subunits: a(1), b(2) and c(10-14). The alpha and beta chains form an alternating ring which encloses part of the gamma chain. F(1) is attached to F(0) by a central stalk formed by the gamma and epsilon chains, while a peripheral stalk is formed by the delta and b chains.

It localises to the cell membrane. F(1)F(0) ATP synthase produces ATP from ADP in the presence of a proton or sodium gradient. F-type ATPases consist of two structural domains, F(1) containing the extramembraneous catalytic core and F(0) containing the membrane proton channel, linked together by a central stalk and a peripheral stalk. During catalysis, ATP synthesis in the catalytic domain of F(1) is coupled via a rotary mechanism of the central stalk subunits to proton translocation. Its function is as follows. This protein is part of the stalk that links CF(0) to CF(1). It either transmits conformational changes from CF(0) to CF(1) or is implicated in proton conduction. The protein is ATP synthase subunit delta of Halalkalibacterium halodurans (strain ATCC BAA-125 / DSM 18197 / FERM 7344 / JCM 9153 / C-125) (Bacillus halodurans).